Consider the following 332-residue polypeptide: Fructose-1,6-bisphosphatase class 1 (332 aa).

Mg(2+)-binding residues include Glu-94, Asp-116, Leu-118, and Asp-119. Substrate is bound by residues 119-122 (DGSS), Asn-211, Tyr-239, 257-259 (YLY), and Lys-269. Glu-275 is a Mg(2+) binding site.

Belongs to the FBPase class 1 family. As to quaternary structure, homotetramer. The cofactor is Mg(2+).

It localises to the cytoplasm. The enzyme catalyses beta-D-fructose 1,6-bisphosphate + H2O = beta-D-fructose 6-phosphate + phosphate. Its pathway is carbohydrate biosynthesis; Calvin cycle. The sequence is that of Fructose-1,6-bisphosphatase class 1 from Synechococcus sp. (strain JA-2-3B'a(2-13)) (Cyanobacteria bacterium Yellowstone B-Prime).